We begin with the raw amino-acid sequence, 502 residues long: Histone acetyltransferase ESA1 (502 aa).

Residues 1 to 24 (MAGGTPGGEPTVGSGEPRLKSLAT) form a disordered region. The 53-residue stretch at 28-80 (IKTGCIAWVEKEGQPRRAEILSIKTTKSGKQFYCNFDNFNKRLDEWVPVIRLD) folds into the Tudor-knot domain. Basic and acidic residues predominate over residues 88-100 (PNPEKEKPKDPKA). The interval 88 to 194 (PNPEKEKPKD…EVKREPAEFS (107 aa)) is disordered. Basic residues predominate over residues 112–122 (QPSKKSQKRPS). Polar residues predominate over residues 142–151 (VENQNRQKSA). Positions 184–194 (TEVKREPAEFS) are enriched in basic and acidic residues. Residues 216–490 (SRIRNISKVQ…VDPTKIQWKP (275 aa)) enclose the MYST-type HAT domain. A C2HC MYST-type zinc finger spans residues 249 to 274 (IFICEFCLSYYGDLKAFTRHRKKCTL). The ESA1-RPD3 motif signature appears at 299-320 (RTWCRNLCLLSKMFLDHKTLYY). Lysine 316 carries the N6-acetyllysine; by autocatalysis modification. Residues 357-361 (ACILT) and 366-372 (QRKGYGR) contribute to the acetyl-CoA site. Glutamate 392 acts as the Proton donor/acceptor in catalysis. An acetyl-CoA-binding site is contributed by serine 396.

Belongs to the MYST (SAS/MOZ) family. As to quaternary structure, component of the NuA4 histone acetyltransferase complex. Post-translationally, autoacetylation at Lys-316 is required for proper function.

The protein resides in the nucleus. It is found in the chromosome. The catalysed reaction is L-lysyl-[histone] + acetyl-CoA = N(6)-acetyl-L-lysyl-[histone] + CoA + H(+). It carries out the reaction L-lysyl-[protein] + acetyl-CoA = N(6)-acetyl-L-lysyl-[protein] + CoA + H(+). The enzyme catalyses 2-hydroxyisobutanoyl-CoA + L-lysyl-[protein] = N(6)-(2-hydroxyisobutanoyl)-L-lysyl-[protein] + CoA + H(+). It catalyses the reaction (2E)-butenoyl-CoA + L-lysyl-[protein] = N(6)-(2E)-butenoyl-L-lysyl-[protein] + CoA + H(+). In terms of biological role, catalytic component of the NuA4 histone acetyltransferase (HAT) complex which is involved in epigenetic transcriptional activation of selected genes principally by acetylation of nucleosomal histones H4, H3, H2B, H2A and H2A variant H2A.Z. Acetylates histone H4 to form H4K5ac, H4K8ac, H4K12ac and H4K16ac, histone H3 to form H3K14ac, and histone H2A to form H2AK4ac and H2AK7ac. The NuA4 complex is involved in the DNA damage response and is required for chromosome segregation. The NuA4 complex plays a direct role in repair of DNA double-strand breaks (DSBs) through homologous recombination. Recruitment to promoters depends on H3K4me. Also acetylates non-histone proteins. In addition to protein acetyltransferase, can use different acyl-CoA substrates, such as 2-hydroxyisobutanoyl-CoA (2-hydroxyisobutyryl-CoA) or (2E)-butenoyl-CoA (crotonyl-CoA), and is able to mediate protein 2-hydroxyisobutyrylation and crotonylation, respectively. This chain is Histone acetyltransferase ESA1 (ESA1), found in Gibberella zeae (strain ATCC MYA-4620 / CBS 123657 / FGSC 9075 / NRRL 31084 / PH-1) (Wheat head blight fungus).